Reading from the N-terminus, the 75-residue chain is Putative DNA-directed RNA polymerase subunit omega (75 aa).

Belongs to the RNA polymerase subunit omega family.

It localises to the plastid. The protein resides in the chloroplast. The catalysed reaction is RNA(n) + a ribonucleoside 5'-triphosphate = RNA(n+1) + diphosphate. Its function is as follows. May be involved in RNA polymerase activity. This chain is Putative DNA-directed RNA polymerase subunit omega (rpoZ), found in Mesostigma viride (Green alga).